The chain runs to 214 residues: tRNA (guanine-N(7)-)-methyltransferase (214 aa).

S-adenosyl-L-methionine is bound by residues Glu44, Asp69, Asp96, and Asp118. Asp118 is a catalytic residue. Lys122 is a binding site for substrate. The segment at 124 to 129 (KHEKRR) is interaction with RNA. Substrate contacts are provided by residues Asp154 and 191 to 194 (TEYE).

It belongs to the class I-like SAM-binding methyltransferase superfamily. TrmB family.

The catalysed reaction is guanosine(46) in tRNA + S-adenosyl-L-methionine = N(7)-methylguanosine(46) in tRNA + S-adenosyl-L-homocysteine. Its pathway is tRNA modification; N(7)-methylguanine-tRNA biosynthesis. In terms of biological role, catalyzes the formation of N(7)-methylguanine at position 46 (m7G46) in tRNA. The polypeptide is tRNA (guanine-N(7)-)-methyltransferase (Enterococcus faecalis (strain ATCC 700802 / V583)).